We begin with the raw amino-acid sequence, 137 residues long: MLKEFKEFALKGNMVDLAIGVIIGGAFGGLVNSIVNDIIMPIIGLITGGIDFSNMFIQLAGEPRATLAAAREAGATIAYGNFVTLLINFLIIAWVLFLVVKGMNRMKKKEEAKPEPEAPREEVLLTEIRDLLAKQKA.

3 helical membrane-spanning segments follow: residues 15 to 35 (VDLAIGVIIGGAFGGLVNSIV), 38 to 58 (IIMPIIGLITGGIDFSNMFIQ), and 80 to 100 (GNFVTLLINFLIIAWVLFLVV).

Belongs to the MscL family. Homopentamer.

It is found in the cell inner membrane. In terms of biological role, channel that opens in response to stretch forces in the membrane lipid bilayer. May participate in the regulation of osmotic pressure changes within the cell. This chain is Large-conductance mechanosensitive channel, found in Brucella anthropi (strain ATCC 49188 / DSM 6882 / CCUG 24695 / JCM 21032 / LMG 3331 / NBRC 15819 / NCTC 12168 / Alc 37) (Ochrobactrum anthropi).